The primary structure comprises 330 residues: Fructose-1,6-bisphosphatase class 1 (330 aa).

The Mg(2+) site is built by E84, D103, L105, and D106. Residues 106–109 (DGSS), N196, and K262 contribute to the substrate site. Mg(2+) is bound at residue E268.

It belongs to the FBPase class 1 family. Homotetramer. Requires Mg(2+) as cofactor.

The protein resides in the cytoplasm. The catalysed reaction is beta-D-fructose 1,6-bisphosphate + H2O = beta-D-fructose 6-phosphate + phosphate. It participates in carbohydrate biosynthesis; gluconeogenesis. The chain is Fructose-1,6-bisphosphatase class 1 from Shewanella putrefaciens (strain CN-32 / ATCC BAA-453).